Consider the following 89-residue polypeptide: Small ribosomal subunit protein uS15 (89 aa).

It belongs to the universal ribosomal protein uS15 family. In terms of assembly, part of the 30S ribosomal subunit. Forms a bridge to the 50S subunit in the 70S ribosome, contacting the 23S rRNA.

Functionally, one of the primary rRNA binding proteins, it binds directly to 16S rRNA where it helps nucleate assembly of the platform of the 30S subunit by binding and bridging several RNA helices of the 16S rRNA. Its function is as follows. Forms an intersubunit bridge (bridge B4) with the 23S rRNA of the 50S subunit in the ribosome. The polypeptide is Small ribosomal subunit protein uS15 (Aeromonas hydrophila subsp. hydrophila (strain ATCC 7966 / DSM 30187 / BCRC 13018 / CCUG 14551 / JCM 1027 / KCTC 2358 / NCIMB 9240 / NCTC 8049)).